A 565-amino-acid polypeptide reads, in one-letter code: NAD-dependent malic enzyme (565 aa).

Catalysis depends on tyrosine 104, which acts as the Proton donor. Arginine 157 contacts NAD(+). Lysine 175 serves as the catalytic Proton acceptor. Residues glutamate 246, aspartate 247, and aspartate 270 each coordinate a divalent metal cation. 2 residues coordinate NAD(+): aspartate 270 and asparagine 418.

It belongs to the malic enzymes family. As to quaternary structure, homotetramer. Mg(2+) serves as cofactor. It depends on Mn(2+) as a cofactor.

It catalyses the reaction (S)-malate + NAD(+) = pyruvate + CO2 + NADH. It carries out the reaction oxaloacetate + H(+) = pyruvate + CO2. This Photorhabdus laumondii subsp. laumondii (strain DSM 15139 / CIP 105565 / TT01) (Photorhabdus luminescens subsp. laumondii) protein is NAD-dependent malic enzyme.